Reading from the N-terminus, the 316-residue chain is Serine protease 45 (316 aa).

Positions 1-38 (MAASLSRLSAGLAASRPLGLSRSFLLLVLLLLNSGYKG) are cleaved as a signal peptide. The region spanning 49–290 (WWPKNLDLSR…YSRWIKKQIS (242 aa)) is the Peptidase S1 domain. Cys-74 and Cys-90 are oxidised to a cystine. The active-site Charge relay system is His-89. Asn-110 is a glycosylation site (N-linked (GlcNAc...) asparagine). Asp-137 serves as the catalytic Charge relay system. N-linked (GlcNAc...) asparagine glycans are attached at residues Asn-162 and Asn-186. 3 disulfides stabilise this stretch: Cys-171–Cys-248, Cys-206–Cys-229, and Cys-238–Cys-266. Catalysis depends on Ser-242, which acts as the Charge relay system.

This sequence belongs to the peptidase S1 family.

It localises to the secreted. This Bos taurus (Bovine) protein is Serine protease 45 (PRSS45).